We begin with the raw amino-acid sequence, 235 residues long: MWVNKYIDDCTDEDLNDRDFIASVVDRAIFHFAINSICNPGDNKDAMPIEQCTFDVETKNDLPSTVQLFYEESKDNEPLANIHFQAIGSGFLTFVNACQEHDDNSLKLFASLLISLSYSSAYADLSETVYINENNESYLKAQFEKLSQRDMKKYLGEMKRLADGGEMNFDGYLDKMSHLVNEGTLDPDILSKMRDAAPQLISFAKSFDPTSKEEIKILTDTSKLIYDLFGVKSEK.

This is an uncharacterized protein from Escherichia coli (strain K12).